Consider the following 843-residue polypeptide: MAQVLHVPAPFPGTPGQASPAAFPSKEPDPPYSVETPYGYRLDLDFLKYVDDIEKGHTLRRVAVQRRPRLGSLPRGPGSWWTSTESLCSDASGDSRHSAYSYCGRGFYPQYGALETRIGSNPRVERTLLDARRRLEDQAAAPSSGGLGSLTPSAAGSTSSLAGVGLLPPTPRSSGLSTPVAPSAGHLAHVREQMAGALRKLRQLEEQVKLIPVLQVKLSVLQEEKRQLTVQLKSQKFLGHPSGTRSRSELCLDLPEAPDDPAALETRSVGTWVRERDLGIPDGEAALVAKVAVLETQLKKALQELRAAQTQQVDLQPQAWPPPDTQVRVDTVRVVEGPREVEVAASTAAGALAQRAQSLEPYGTGLKALTTSGGPENTLVFRSHEVVETMCPLPTATTGNVHTAKKISITERSCTGAPRMTEPSSVNPRPAAASVVQPENPVPAAQDTTDKKPTRPAAASQDSQAADGAGRASLATKRKEDPADPEVNQRNLQFVGVNGGYESPSEDSSTAENSEHESTENEGPEPPARVLSPAECPQLRPPGAAVATTSLEGPQLSQESQRVPAPEVASGPDPEEEIRMDLSPDLISACLALEKYLENPNALTERELKVAYTTVLQEWLRLACRSDAHPELVRRHLVTFRAMSARLLDYVVNIADSNGNTALHYSVSHANFPVVRQLLDSGVCHVDKLNRAGYSPIMLTALATLKTQDDIETILQLFRLGNVNAKASQAGQTALMLAVSHGRVDVVRALLACEADVNIQDEDGSTALMCACEHGHKEITGLLLAVPSCDISLTDRDGSTALMVALDAGQSEIASMLYSRMNIKCSFAPMSDYESPASSSAEE.

Residues 1–31 (MAQVLHVPAPFPGTPGQASPAAFPSKEPDPP) form a disordered region. The interaction with AIFM1 stretch occupies residues 1–72 (MAQVLHVPAP…AVQRRPRLGS (72 aa)). Residues serine 19, serine 83, serine 86, serine 89, and serine 92 each carry the phosphoserine modification. Arginine 105 carries the omega-N-methylarginine modification. The disordered stretch occupies residues 161 to 182 (LAGVGLLPPTPRSSGLSTPVAP). Residue threonine 170 is modified to Phosphothreonine. Coiled coils occupy residues 183–234 (SAGH…QLKS) and 282–313 (DGEA…TQQV). Phosphothreonine is present on threonine 331. Position 358 is a phosphoserine (serine 358). The tract at residues 410 to 577 (TERSCTGAPR…VASGPDPEEE (168 aa)) is disordered. A compositionally biased stretch (low complexity) spans 457–470 (AAASQDSQAADGAG). Position 532 is a phosphoserine (serine 532). The segment covering 547-561 (ATTSLEGPQLSQESQ) has biased composition (polar residues). An ANK 0; degenerate repeat occupies 606 to 643 (RELKVAYTTVLQEWLRLACRSDAHPELVRRHLVTFRAM). The segment at 661 to 827 (TALHYSVSHA…YSRMNIKCSF (167 aa)) is interaction with NCOA1. 5 ANK repeats span residues 673 to 703 (PVVR…TALA), 707 to 740 (TQDD…LAVS), 745 to 774 (DVVR…ACEH), 778 to 808 (EITG…ALDA), and 812 to 842 (EIAS…SSAE).

In terms of assembly, interacts (non-phosphorylated form) with NCOA1; NCOA2 AND NCOA3. Interacts with AIFM1. Interacts with ARHGDIA; the interaction is direct and may regulate the interaction of ARHGDIA with RHOA, RAC1 and CDC42. Interacts (via ANK repeats 1-5) with KIF21A (via residues 1148-1169). Phosphorylated by casein kinase II upon estrogen stimulation. Phosphorylation induces the release by KANK2 of NCOA1 and its translocation to the nucleus where NCOA1 can activate gene transcription. In terms of tissue distribution, widely expressed with highest levels in liver and skeletal muscle.

It localises to the cytoplasm. The protein resides in the mitochondrion. Functionally, involved in transcription regulation by sequestering in the cytoplasm nuclear receptor coactivators such as NCOA1, NCOA2 and NCOA3. Involved in regulation of caspase-independent apoptosis by sequestering the proapoptotic factor AIFM1 in mitochondria. Pro-apoptotic stimuli can induce its proteasomal degradation allowing the translocation of AIFM1 to the nucleus to induce apoptosis. Involved in the negative control of vitamin D receptor signaling pathway. Involved in actin stress fibers formation through its interaction with ARHGDIA and the regulation of the Rho signaling pathway. May thereby play a role in cell adhesion and migration, regulating for instance podocytes migration during development of the kidney. Through the Rho signaling pathway may also regulate cell proliferation. This Mus musculus (Mouse) protein is KN motif and ankyrin repeat domain-containing protein 2 (Kank2).